Consider the following 692-residue polypeptide: Elongation factor G (692 aa).

Residues 8–282 (AKTRNIGIMA…AVIDYLPSPL (275 aa)) enclose the tr-type G domain. Residues 17 to 24 (AHVDAGKT), 81 to 85 (DTPGH), and 135 to 138 (NKMD) contribute to the GTP site.

Belongs to the TRAFAC class translation factor GTPase superfamily. Classic translation factor GTPase family. EF-G/EF-2 subfamily.

Its subcellular location is the cytoplasm. Its function is as follows. Catalyzes the GTP-dependent ribosomal translocation step during translation elongation. During this step, the ribosome changes from the pre-translocational (PRE) to the post-translocational (POST) state as the newly formed A-site-bound peptidyl-tRNA and P-site-bound deacylated tRNA move to the P and E sites, respectively. Catalyzes the coordinated movement of the two tRNA molecules, the mRNA and conformational changes in the ribosome. This is Elongation factor G from Streptococcus uberis (strain ATCC BAA-854 / 0140J).